Consider the following 289-residue polypeptide: MSKAREIRTKIASIKNTQKITRAMELVAASKMRKAQDRMAISRPYASKIRKVISHVAASHAEYPHPYLQQRENIKRVGYIIVTTDRGLCGGLNVNLFRTAIADMKKWQADNIGMDLCVIGRKGEAFFRRYGGNVLAVADHLGDAPEVQDIIGIVKVMLDQYDKQQIDAIYIATNEFVNTMVQKPLVRQLLPLKTDEEEVEGGYWDYIYEPDESKDLLEMLLVRYIESQVYQAVIENIACEQSARMVAMKNATENAGQLIDELRLIYNKARQAGITREIAEIVAGAAAVE.

The protein belongs to the ATPase gamma chain family. In terms of assembly, F-type ATPases have 2 components, CF(1) - the catalytic core - and CF(0) - the membrane proton channel. CF(1) has five subunits: alpha(3), beta(3), gamma(1), delta(1), epsilon(1). CF(0) has three main subunits: a, b and c.

It localises to the cell inner membrane. Functionally, produces ATP from ADP in the presence of a proton gradient across the membrane. The gamma chain is believed to be important in regulating ATPase activity and the flow of protons through the CF(0) complex. In Coxiella burnetii (strain CbuK_Q154) (Coxiella burnetii (strain Q154)), this protein is ATP synthase gamma chain.